The chain runs to 240 residues: Ubiquinone biosynthesis O-methyltransferase (240 aa).

4 residues coordinate S-adenosyl-L-methionine: arginine 44, glycine 64, aspartate 85, and methionine 129.

It belongs to the methyltransferase superfamily. UbiG/COQ3 family.

The catalysed reaction is a 3-demethylubiquinol + S-adenosyl-L-methionine = a ubiquinol + S-adenosyl-L-homocysteine + H(+). The enzyme catalyses a 3-(all-trans-polyprenyl)benzene-1,2-diol + S-adenosyl-L-methionine = a 2-methoxy-6-(all-trans-polyprenyl)phenol + S-adenosyl-L-homocysteine + H(+). The protein operates within cofactor biosynthesis; ubiquinone biosynthesis. O-methyltransferase that catalyzes the 2 O-methylation steps in the ubiquinone biosynthetic pathway. This Photorhabdus laumondii subsp. laumondii (strain DSM 15139 / CIP 105565 / TT01) (Photorhabdus luminescens subsp. laumondii) protein is Ubiquinone biosynthesis O-methyltransferase.